A 294-amino-acid polypeptide reads, in one-letter code: MSLFDWFADRRKGQFVGKVTQESEESDGLWEKCPECGQVVYRKDLIDNCSVCSNCGHHNRIDSKERIRLISDPNTFKSINNHLTPVDPLGFKDRRAYADRLRESQAGTGLKDGVLTGTCEVNSIPMALAVMDFRFMGGSMGSVVGEKITRLIEHSTKEKLPLLIVCASGGARMQEGMLSLMQMAKISGALERHRDAQLLYMPLLTHPTTGGVTASFAMLGDLILAEPKALIGFAGRRVIEQTLREKLPDNFQTAEYLQDHGFVDTIVPRTELKETLAKILRLHKTQVVKLQTNA.

Residues 29-294 form the CoA carboxyltransferase N-terminal domain; the sequence is LWEKCPECGQ…TQVVKLQTNA (266 aa). Zn(2+) contacts are provided by C33, C36, C52, and C55. The C4-type zinc finger occupies 33–55; sequence CPECGQVVYRKDLIDNCSVCSNC.

It belongs to the AccD/PCCB family. Acetyl-CoA carboxylase is a heterohexamer composed of biotin carboxyl carrier protein (AccB), biotin carboxylase (AccC) and two subunits each of ACCase subunit alpha (AccA) and ACCase subunit beta (AccD). It depends on Zn(2+) as a cofactor.

Its subcellular location is the cytoplasm. It catalyses the reaction N(6)-carboxybiotinyl-L-lysyl-[protein] + acetyl-CoA = N(6)-biotinyl-L-lysyl-[protein] + malonyl-CoA. It functions in the pathway lipid metabolism; malonyl-CoA biosynthesis; malonyl-CoA from acetyl-CoA: step 1/1. Its function is as follows. Component of the acetyl coenzyme A carboxylase (ACC) complex. Biotin carboxylase (BC) catalyzes the carboxylation of biotin on its carrier protein (BCCP) and then the CO(2) group is transferred by the transcarboxylase to acetyl-CoA to form malonyl-CoA. In Prochlorococcus marinus (strain NATL2A), this protein is Acetyl-coenzyme A carboxylase carboxyl transferase subunit beta.